The primary structure comprises 192 residues: Ion-translocating oxidoreductase complex subunit B (192 aa).

Residues 1-26 (MNTIWIAVGALTLLGLVFGAILGYAS) form a hydrophobic region. A 4Fe-4S domain is found at 32–91 (EDDPVVEKIDAILPQSQCGQCGYPGCRPYAEAVGLQGEKINRCAPGGEAVMLKIAELLNV). Positions 49, 52, 57, 74, 117, 120, 123, 127, 147, 150, 153, and 157 each coordinate [4Fe-4S] cluster. 2 4Fe-4S ferredoxin-type domains span residues 108 to 137 (MLAVIDENNCIGCTKCIQACPVDAIVGATR) and 138 to 167 (AMHTVMSDLCTGCNLCVDPCPTHCIELRPV).

It belongs to the 4Fe4S bacterial-type ferredoxin family. RnfB subfamily. In terms of assembly, the complex is composed of six subunits: RsxA, RsxB, RsxC, RsxD, RsxE and RsxG. It depends on [4Fe-4S] cluster as a cofactor.

The protein resides in the cell inner membrane. Part of a membrane-bound complex that couples electron transfer with translocation of ions across the membrane. Required to maintain the reduced state of SoxR. The protein is Ion-translocating oxidoreductase complex subunit B of Salmonella dublin (strain CT_02021853).